The following is a 131-amino-acid chain: Arsenate reductase 2 (131 aa).

Residues cysteine 10, cysteine 82, and cysteine 89 each act as nucleophile in the active site. Intrachain disulfides connect cysteine 10-cysteine 82 and cysteine 82-cysteine 89.

This sequence belongs to the low molecular weight phosphotyrosine protein phosphatase family. Thioredoxin-coupled ArsC subfamily.

It localises to the cytoplasm. It catalyses the reaction arsenate + [thioredoxin]-dithiol + H(+) = arsenite + [thioredoxin]-disulfide + H2O. Functionally, catalyzes the reduction of arsenate [As(V)] to arsenite [As(III)]. In Staphylococcus haemolyticus (strain JCSC1435), this protein is Arsenate reductase 2.